The sequence spans 280 residues: Nucleotide-binding protein Dgeo_0723 (280 aa).

8 to 15 (GLSGSGKS) provides a ligand contact to ATP. GTP is bound at residue 57 to 60 (DART).

This sequence belongs to the RapZ-like family.

Displays ATPase and GTPase activities. The polypeptide is Nucleotide-binding protein Dgeo_0723 (Deinococcus geothermalis (strain DSM 11300 / CIP 105573 / AG-3a)).